Consider the following 260-residue polypeptide: Ribosomal RNA small subunit methyltransferase A (260 aa).

Positions 23, 48, 69, 94, and 110 each coordinate S-adenosyl-L-methionine.

Belongs to the class I-like SAM-binding methyltransferase superfamily. rRNA adenine N(6)-methyltransferase family. RsmA subfamily.

It is found in the cytoplasm. It carries out the reaction adenosine(1518)/adenosine(1519) in 16S rRNA + 4 S-adenosyl-L-methionine = N(6)-dimethyladenosine(1518)/N(6)-dimethyladenosine(1519) in 16S rRNA + 4 S-adenosyl-L-homocysteine + 4 H(+). Specifically dimethylates two adjacent adenosines (A1518 and A1519) in the loop of a conserved hairpin near the 3'-end of 16S rRNA in the 30S particle. May play a critical role in biogenesis of 30S subunits. This is Ribosomal RNA small subunit methyltransferase A from Thermotoga petrophila (strain ATCC BAA-488 / DSM 13995 / JCM 10881 / RKU-1).